Reading from the N-terminus, the 272-residue chain is Hematopoietically-expressed homeobox protein hhex (272 aa).

A DNA-binding region (homeobox) is located at residues 137-196 (RKGGQVRFSNDQTIELEKKFETQKYLSPPERKRLAKMLQLSERQVKTWFQNRRAKWRRLK). Positions 222-272 (CLSAEQKSRESSLDDPTSSPTSQGNLDSEVSDDSDQEVDIEGDKGYYNCAH) are disordered. Residues 250–261 (EVSDDSDQEVDI) are compositionally biased toward acidic residues.

In terms of tissue distribution, first expressed in the dorsal endomesoderm of the gastrula stage embryo. The dorsal endomesoderm contributes to forming the embryonic liver, and expression continues in the liver throughout development. Also expressed in precursors of the developing thyroid gland, and beginning at the tailbud stage, expressed in the ventral region of the head. Also transiently expressed in the endothelial layer of developing vascular tissues of the embryo, beginning at the tailbud stages.

The protein localises to the nucleus. Its function is as follows. Recognizes the DNA sequence 5'-ATTAA-3'. Transcriptional repressor. Regulates the differentiation of both endothelial and blood cells. Probably plays a role in the proliferation of vascular endothelial cells during blood vessel development. Establishes anterior identity at two levels; acts early to enhance canonical wnt-signaling by repressing expression of tle4, and acts later to inhibit nodal-signaling by directly targeting nodal/nr1 and nodal2/nr2. May play a role in liver development. Induces heart development. The chain is Hematopoietically-expressed homeobox protein hhex from Xenopus laevis (African clawed frog).